The primary structure comprises 440 residues: Sialyltransferase-like protein 2 (440 aa).

Topologically, residues 1 to 5 are cytoplasmic; it reads MKLLH. The helical; Signal-anchor for type II membrane protein transmembrane segment at 6–26 threads the bilayer; sequence LIFLLALTTGISAVLIYIIGV. Residues 27–440 are Lumenal-facing; the sequence is SNLYESNRFT…HGQLCITPAD (414 aa). N-linked (GlcNAc...) asparagine glycosylation is found at asparagine 113 and asparagine 149.

Belongs to the glycosyltransferase 29 family.

The protein localises to the golgi apparatus membrane. In terms of biological role, may be involved in the transfer of 2-keto-3-deoxy-D-lyxo-heptulosaric acid (Dha) and/or 2-keto-3-deoxy-D-manno-octulosonic acid (Kdo) on the homogalacturonan backbone of rhamnogalacturonan-II. Required for efficient pollen grain germination and pollen tube elongation. Does not possess sialyltransferase activity in vitro. The protein is Sialyltransferase-like protein 2 of Arabidopsis thaliana (Mouse-ear cress).